Consider the following 380-residue polypeptide: Crotonobetainyl-CoA reductase (380 aa).

This sequence belongs to the acyl-CoA dehydrogenase family. Homotetramer. It depends on FAD as a cofactor.

It localises to the cytoplasm. The enzyme catalyses 4-(trimethylamino)butanoyl-CoA + oxidized [electron-transfer flavoprotein] + H(+) = crotonobetainyl-CoA + reduced [electron-transfer flavoprotein]. It participates in amine and polyamine metabolism; carnitine metabolism. Catalyzes the reduction of crotonobetainyl-CoA to gamma-butyrobetainyl-CoA. The chain is Crotonobetainyl-CoA reductase from Citrobacter koseri (strain ATCC BAA-895 / CDC 4225-83 / SGSC4696).